The sequence spans 599 residues: MKNIRNFSIIAHIDHGKSTLSDRIIQICGGLSDREMEAQVLDSMDLERERGITIKAQSVTLDYKASDGETYQLNFIDTPGHVDFSYEVSRSLAACEGALLVVDAGQGVEAQTLANCYTAMEMDLEVVPVLNKIDLPAADPERVAEEIEDIVGIDATDAVRCSAKTGVGVQDVLERLVRDIPPPEGDPEGSLQALIIDSWFDNYLGVVSLIRIKNGTLRKGDKVKVMSTGQTYNADRLGIFTPKQVDRTELKCGEVGWLVCAIKDIHGAPVGDTLTLARNPAEKALPGFKKVKPQVYAGLFPVSSDDYEAFRDALGKLSLNDASLFYEPESSSALGFGFRCGFLGLLHMEIIQERLEREYDLDLITTAPTVVYEVETTSREVIYVDSPSKLPAVNNIYELREPIAECHMLLPQAYLGNVITLCVEKRGVQTNMVYHGNQVALTYEIPMAEVVLDFFDRLKSTSRGYASLDYNFKRFQASDMVRVDVLINGERVDALALITHRDNSQNRGRELVEKMKDLIPRQQFDIAIQAAIGTHIIARSTVKQLRKNVLAKCYGGDISRKKKLLQKQKEGKKRMKQIGNVELPQEAFLAILHVGKDNK.

Positions 2 to 184 constitute a tr-type G domain; sequence KNIRNFSIIA…RLVRDIPPPE (183 aa). Residues 14–19 and 131–134 contribute to the GTP site; these read DHGKST and NKID.

It belongs to the TRAFAC class translation factor GTPase superfamily. Classic translation factor GTPase family. LepA subfamily.

It localises to the cell inner membrane. The enzyme catalyses GTP + H2O = GDP + phosphate + H(+). Functionally, required for accurate and efficient protein synthesis under certain stress conditions. May act as a fidelity factor of the translation reaction, by catalyzing a one-codon backward translocation of tRNAs on improperly translocated ribosomes. Back-translocation proceeds from a post-translocation (POST) complex to a pre-translocation (PRE) complex, thus giving elongation factor G a second chance to translocate the tRNAs correctly. Binds to ribosomes in a GTP-dependent manner. This Shigella sonnei (strain Ss046) protein is Elongation factor 4.